The sequence spans 142 residues: Transmembrane protein 170A (142 aa).

The Lumenal portion of the chain corresponds to 1-48 (MEGGGGGLGGEPGLLQQILSLRLVPRVGNVTDCQRATLCSFPEMWYGV). Residue N29 is glycosylated (N-linked (GlcNAc...) asparagine). Residues 49-69 (FLWALVSSLFFHIPAGLLALF) traverse the membrane as a helical segment. Over 70 to 78 (TLRHHKYGR) the chain is Cytoplasmic. The helical transmembrane segment at 79-99 (FMSVGIFLMGVLGPISAGILT) threads the bilayer. At 100-114 (SAAIAGVYKAAGKEM) the chain is on the lumenal side. Residues 115–135 (IPFEALVLGVGQTFCVLIVSF) form a helical membrane-spanning segment. At 136–142 (LRILATL) the chain is on the cytoplasmic side.

It belongs to the TMEM170 family.

It is found in the endoplasmic reticulum membrane. The protein localises to the nucleus envelope. In terms of biological role, may regulate membrane morphogenesis in the endoplasmic reticulum (ER) by promoting ER sheet formation at the expense of ER tubules. This is Transmembrane protein 170A (tmem170a) from Xenopus laevis (African clawed frog).